We begin with the raw amino-acid sequence, 450 residues long: ATP-dependent protease ATPase subunit HslU (450 aa).

Residues Val29, 71–76, Asp261, Glu328, and Arg400 each bind ATP; that span reads GVGKTE.

The protein belongs to the ClpX chaperone family. HslU subfamily. In terms of assembly, a double ring-shaped homohexamer of HslV is capped on each side by a ring-shaped HslU homohexamer. The assembly of the HslU/HslV complex is dependent on binding of ATP.

It is found in the cytoplasm. ATPase subunit of a proteasome-like degradation complex; this subunit has chaperone activity. The binding of ATP and its subsequent hydrolysis by HslU are essential for unfolding of protein substrates subsequently hydrolyzed by HslV. HslU recognizes the N-terminal part of its protein substrates and unfolds these before they are guided to HslV for hydrolysis. This Rickettsia prowazekii (strain Madrid E) protein is ATP-dependent protease ATPase subunit HslU.